Here is a 231-residue protein sequence, read N- to C-terminus: NADH-ubiquinone oxidoreductase chain 4 (231 aa).

A run of 7 helical transmembrane segments spans residues proline 1–isoleucine 21, leucine 34–leucine 54, serine 61–isoleucine 80, tryptophan 84–leucine 106, isoleucine 118–leucine 138, leucine 156–serine 176, and leucine 211–isoleucine 231.

Belongs to the complex I subunit 4 family.

It localises to the mitochondrion membrane. It catalyses the reaction a ubiquinone + NADH + 5 H(+)(in) = a ubiquinol + NAD(+) + 4 H(+)(out). Functionally, core subunit of the mitochondrial membrane respiratory chain NADH dehydrogenase (Complex I) that is believed to belong to the minimal assembly required for catalysis. Complex I functions in the transfer of electrons from NADH to the respiratory chain. The immediate electron acceptor for the enzyme is believed to be ubiquinone. The chain is NADH-ubiquinone oxidoreductase chain 4 (MT-ND4) from Hypnale hypnale (Merrem's hump-nosed viper).